A 427-amino-acid chain; its full sequence is MLDISYIRQNPEEVKEMLRRRQQSDDAPKVDRLLERDAERKAMVQRTDDLKALRNRVSKEIANIKRTGQGSGEELISQMKEVSDQIADLDLGLSTLEGEIEELLLTLPNKLHESVPEGRSADENILYKGPVSFEHNLDFPVKDHLELGKSLGLLDFERGAKITGAGFPVYTGKGARLERALINFMLDTHSANHGYTEVFPPFMVNKESLRGTGQWPKFADQVYHMPEDGLYAIPTAEVPVTNLHRGEMLEDDKLPIAYAAYSACFRREAGSYGKDTRGFLRVHQFNKVEMVRFTRPEKSYEALEEILSHAEAILCALKIPYRVITLCSGDISANAAKCYDIEVWSPAENKYLEASSVSNFEDYQARRSNIRFKPGGKGKPEFVHTLNGSGLATSRLMVSLLEHYQTADGKIMVPEVLRPYTGFDVIE.

235–237 serves as a coordination point for L-serine; sequence TAE. Residues 266–268 and valine 282 contribute to the ATP site; that span reads RRE. Glutamate 289 contacts L-serine. 353–356 provides a ligand contact to ATP; that stretch reads EASS. Serine 389 contributes to the L-serine binding site.

It belongs to the class-II aminoacyl-tRNA synthetase family. Type-1 seryl-tRNA synthetase subfamily. As to quaternary structure, homodimer. The tRNA molecule binds across the dimer.

It is found in the cytoplasm. The enzyme catalyses tRNA(Ser) + L-serine + ATP = L-seryl-tRNA(Ser) + AMP + diphosphate + H(+). It carries out the reaction tRNA(Sec) + L-serine + ATP = L-seryl-tRNA(Sec) + AMP + diphosphate + H(+). Its pathway is aminoacyl-tRNA biosynthesis; selenocysteinyl-tRNA(Sec) biosynthesis; L-seryl-tRNA(Sec) from L-serine and tRNA(Sec): step 1/1. Its function is as follows. Catalyzes the attachment of serine to tRNA(Ser). Is also able to aminoacylate tRNA(Sec) with serine, to form the misacylated tRNA L-seryl-tRNA(Sec), which will be further converted into selenocysteinyl-tRNA(Sec). The sequence is that of Serine--tRNA ligase from Chlorobaculum parvum (strain DSM 263 / NCIMB 8327) (Chlorobium vibrioforme subsp. thiosulfatophilum).